The following is a 1379-amino-acid chain: ABC multidrug transporter MDR2 (1379 aa).

The chain crosses the membrane as a helical span at residues 65–85; that stretch reads IALIVIGTIAGIGAGIPFPLL. An ABC transmembrane type-1 1 domain is found at 69 to 367; it reads VIGTIAGIGA…MAPFMHIFAS (299 aa). The N-linked (GlcNAc...) asparagine glycan is linked to asparagine 97. Helical transmembrane passes span 119–139, 193–213, 215–235, 301–321, and 336–356; these read VLQVIYVSILNFVCMYIHTGC, KVGLFIGTISYFVAAYIVAFL, VATIAAMLMSVVPIYFLMAFG, IQFGMLYFVAYASNALAFWQG, and VSVGAVYTVIFVLLDASFVLS. The ABC transporter 1 domain occupies 403 to 682; that stretch reads IELQDVTFNY…DGVYAGMVRL (280 aa). 438–445 provides a ligand contact to ATP; the sequence is GTSGSGKS. N-linked (GlcNAc...) asparagine glycans are attached at residues asparagine 552 and asparagine 633. The interval 738–758 is disordered; sequence YMPEEADSLPTEPENEKEKPK. Transmembrane regions (helical) follow at residues 781–801, 820–840, 881–901, and 920–942; these read LGLITSIMIGVSYTGEAVIFG, GMLFGLLFFILAIVKFAAVIV, LLVALVTSDASALSSLTGTTI, and VIAWKIAVVLLATLPVLLASGVL. The region spanning 781–1068 is the ABC transmembrane type-1 2 domain; that stretch reads LGLITSIMIG…MFALVPDISK (288 aa). Asparagine 989 carries an N-linked (GlcNAc...) asparagine glycan. A run of 2 helical transmembrane segments spans residues 1008 to 1028 and 1032 to 1052; these read FWLSLAYSISTLVYALAYWWG and ILAGMYTQVQFFIVLPALLFS. The ABC transporter 2 domain occupies 1135–1374; sequence VQFRNVHFRY…CESYRANVIH (240 aa). 1170–1177 lines the ATP pocket; it reads GPSGSGKS.

This sequence belongs to the ABC transporter superfamily. ABCB family. Multidrug resistance exporter (TC 3.A.1.201) subfamily.

It is found in the cell membrane. Pleiotropic ABC efflux transporter that may be involved in the modulation susceptibility to a wide range of unrelated cytotoxic compounds. This is ABC multidrug transporter MDR2 from Trichophyton interdigitale (strain MR816).